A 98-amino-acid chain; its full sequence is ESAT-6-like protein EsxK (98 aa).

Belongs to the WXG100 family. CFP-10 subfamily. In terms of assembly, strongly interacts with EsxL to form a heterodimeric complex under reducing conditions. The complex is regulated by the redox state of EsxL.

The protein localises to the secreted. This chain is ESAT-6-like protein EsxK, found in Mycobacterium tuberculosis (strain ATCC 25618 / H37Rv).